Here is a 124-residue protein sequence, read N- to C-terminus: Type-4 ice-structuring protein (124 aa).

An N-terminal signal peptide occupies residues 1–20; it reads MKFSLIAAVALLALAQGSFA. Glutamine 21 is subject to Pyrrolidone carboxylic acid.

Belongs to the apolipoprotein A1/A4/E family.

The protein localises to the secreted. Antifreeze proteins lower the blood freezing point. The sequence is that of Type-4 ice-structuring protein from Paralichthys olivaceus (Bastard halibut).